Consider the following 381-residue polypeptide: 2-methylcitrate synthase 1 (381 aa).

His192 contacts substrate. His227 is an active-site residue. Arg260–Phe264 serves as a coordination point for CoA. Residue His266 is part of the active site. Arg275 is a substrate binding site. The active site involves Asp317. Arg342 and Arg361 together coordinate substrate.

Belongs to the citrate synthase family. Homodimer.

It catalyses the reaction propanoyl-CoA + oxaloacetate + H2O = (2S,3S)-2-methylcitrate + CoA + H(+). The catalysed reaction is oxaloacetate + acetyl-CoA + H2O = citrate + CoA + H(+). Its pathway is carbohydrate metabolism; tricarboxylic acid cycle. In terms of biological role, catalyzes the Claisen condensation of propionyl-CoA and oxaloacetate (OAA) to yield 2-methylcitrate (2-MC) and CoA. Also catalyzes the condensation of oxaloacetate with propionyl-CoA but with a lower specificity. In Corynebacterium glutamicum (strain ATCC 13032 / DSM 20300 / JCM 1318 / BCRC 11384 / CCUG 27702 / LMG 3730 / NBRC 12168 / NCIMB 10025 / NRRL B-2784 / 534), this protein is 2-methylcitrate synthase 1 (prpC1).